The sequence spans 170 residues: CFA/I fimbrial subunit B (170 aa).

An N-terminal signal peptide occupies residues 1-23; the sequence is MKFKKTIGAMALTTMFVAVSASA.

The protein belongs to the fimbrial CS1 protein family. CFA/I fimbriae are rather rigid, thread-like filaments of 0.5-1 micrometer, with an apparent axial hole, and a diameter of 7 nanometers. A single CFA/I fimbria consists of about 100 identical protein subunits.

It is found in the fimbrium. In terms of biological role, fimbriae (also called pili), polar filaments radiating from the surface of the bacterium to a length of 0.5-1.5 micrometers and numbering 100-300 per cell, enable bacteria to colonize the epithelium of specific host organs. The chain is CFA/I fimbrial subunit B (cfaB) from Escherichia coli.